A 291-amino-acid polypeptide reads, in one-letter code: Ribose-phosphate pyrophosphokinase (291 aa).

ATP is bound by residues 34–36 and 93–94; these read DGE and RQ. Mg(2+) is bound by residues histidine 127 and aspartate 165. Residue lysine 188 is part of the active site. D-ribose 5-phosphate contacts are provided by residues arginine 190, aspartate 216, and 220 to 224; that span reads STGGT.

Belongs to the ribose-phosphate pyrophosphokinase family. Class III (archaeal) subfamily. Mg(2+) is required as a cofactor.

It localises to the cytoplasm. The catalysed reaction is D-ribose 5-phosphate + ATP = 5-phospho-alpha-D-ribose 1-diphosphate + AMP + H(+). It participates in metabolic intermediate biosynthesis; 5-phospho-alpha-D-ribose 1-diphosphate biosynthesis; 5-phospho-alpha-D-ribose 1-diphosphate from D-ribose 5-phosphate (route I): step 1/1. Involved in the biosynthesis of the central metabolite phospho-alpha-D-ribosyl-1-pyrophosphate (PRPP) via the transfer of pyrophosphoryl group from ATP to 1-hydroxyl of ribose-5-phosphate (Rib-5-P). The protein is Ribose-phosphate pyrophosphokinase of Sulfurisphaera tokodaii (strain DSM 16993 / JCM 10545 / NBRC 100140 / 7) (Sulfolobus tokodaii).